The primary structure comprises 3015 residues: Genome polyprotein (3015 aa).

Ser-2 carries the post-translational modification N-acetylserine; by host. The interval Ser-2–Lys-23 is interaction with STAT1. Positions Ser-2–Pro-58 are interaction with EIF2AK2/PKR. The tract at residues Ser-2–Arg-59 is interaction with DDX3X. Positions Ser-2–Ser-75 are disordered. Residues Ser-2 to Asn-168 are Cytoplasmic-facing. Short sequence motifs (nuclear localization signal) lie at residues Pro-5–Arg-13 and Pro-38–Arg-43. The span at Pro-7–Asn-16 shows a compositional bias: basic residues. Low complexity predominate over residues Gly-32–Arg-47. Position 53 is a phosphoserine; by host (Ser-53). 2 consecutive short sequence motifs (nuclear localization signal) follow at residues Pro-58–Pro-64 and Pro-66–Pro-71. A phosphoserine; by host mark is found at Ser-99 and Ser-116. Residues Pro-112–Ala-152 are important for endoplasmic reticulum and mitochondrial localization. An interaction with APOA2 region spans residues Val-122–Ser-173. The important for lipid droplets localization stretch occupies residues Tyr-164–Gly-167. A helical transmembrane segment spans residues Leu-169–Ala-189. Residues Leu-178–Ala-191 constitute a propeptide, ER anchor for the core protein, removed in mature form by host signal peptidase. The Lumenal segment spans residues Ser-190–Ala-358. Residues Asn-196, Asn-209, Asn-234, and Asn-250 are each glycosylated (N-linked (GlcNAc...) asparagine; by host). Residues Leu-265–Lys-296 form an important for fusion region. Asn-305 is a glycosylation site (N-linked (GlcNAc...) asparagine; by host). Residues Leu-359 to Ala-379 form a helical membrane-spanning segment. At Gly-380–Val-726 the chain is on the lumenal side. Residues Thr-385–Gln-411 are HVR1. Asn-416, Asn-422, and Asn-429 each carry an N-linked (GlcNAc...) (high mannose) asparagine; by host glycan. Cystine bridges form between Cys-428–Cys-552, Cys-451–Cys-458, Cys-486–Cys-494, and Cys-503–Cys-508. The N-linked (GlcNAc...) asparagine; by host glycan is linked to Asn-447. Residues Val-474–Gly-478 form an HVR2 region. N-linked (GlcNAc...) asparagine; by host glycosylation is present at Asn-475. The segment at Ser-480 to Pro-493 is CD81-binding 1. The N-linked (GlcNAc...) asparagine; by host glycan is linked to Asn-532. The tract at residues Pro-544 to Gly-551 is CD81-binding 2. Asn-556 is a glycosylation site (N-linked (GlcNAc...) asparagine; by host). 4 disulfide bridges follow: Cys-564–Cys-569, Cys-582–Cys-586, Cys-598–Cys-621, and Cys-608–Cys-645. Asn-624 and Asn-646 each carry an N-linked (GlcNAc...) (high mannose) asparagine; by host glycan. An intrachain disulfide couples Cys-653 to Cys-678. Residues Phe-661 to Gln-672 are PKR/eIF2-alpha phosphorylation homology domain (PePHD). The helical transmembrane segment at Leu-727–Ala-747 threads the bilayer. Topologically, residues Ala-748 to Ala-758 are lumenal. Residues Ser-759–Val-779 form a helical membrane-spanning segment. Residues Arg-780 to Ala-783 are Cytoplasmic-facing. A helical transmembrane segment spans residues Val-784–Leu-804. The Lumenal segment spans residues Pro-805–Glu-814. Residues Gln-815–Ala-835 form a helical membrane-spanning segment. The Cytoplasmic portion of the chain corresponds to Tyr-836–His-882. Residues Pro-883 to Leu-903 form a helical membrane-spanning segment. Residues Gln-904–Met-929 are Lumenal-facing. In terms of domain architecture, Peptidase C18 spans Gln-904–Leu-1027. Residues Tyr-905–Arg-1207 are protease NS2-3. A lipid anchor (S-palmitoyl cysteine; by host) is attached at Cys-923. A helical membrane pass occupies residues Ala-930–Ile-950. Residues Ala-930–Ile-950 form an interaction with host SCPS1 region. Residues Tyr-951 to Thr-1658 lie on the Cytoplasmic side of the membrane. Catalysis depends on for protease NS2 activity; shared with dimeric partner residues His-953, Glu-973, and Cys-994. Residues Ala-1028–Pro-1209 enclose the Peptidase S29 domain. Asp-1108 acts as the Charge relay system; for serine protease NS3 activity in catalysis. The Zn(2+) site is built by Cys-1124 and Cys-1126. Ser-1166 acts as the Charge relay system; for serine protease NS3 activity in catalysis. The Zn(2+) site is built by Cys-1172 and His-1176. One can recognise a Helicase ATP-binding domain in the interval Pro-1218–Thr-1370. Residue Ala-1231 to Ser-1238 participates in ATP binding. Residues Ser-1238 and Glu-1318 each contribute to the Mg(2+) site. A DECH box motif is present at residues Asp-1317–His-1320. The tract at residues Gln-1487 to Val-1499 is RNA-binding. The chain crosses the membrane as a helical span at residues Ser-1659–Gly-1679. The tract at residues Cys-1680–Gly-1691 is NS3-binding. Residues Cys-1680–Gln-1806 lie on the Cytoplasmic side of the membrane. Residues Thr-1807–Ser-1827 form a helical membrane-spanning segment. Residues Thr-1828 to Ala-1829 lie on the Lumenal side of the membrane. Residues Phe-1830–Val-1850 form a helical membrane-spanning segment. A topological domain (cytoplasmic) is located at residue Asp-1851. The chain crosses the membrane as a helical span at residues Val-1852–Gly-1872. The Lumenal segment spans residues Glu-1873–Asn-1882. A helical membrane pass occupies residues Leu-1883–Leu-1903. Over Arg-1904–Cys-1973 the chain is Cytoplasmic. Cys-1973 carries S-palmitoyl cysteine; by host lipidation. The stretch at Ser-1974–Ala-2003 is an intramembrane region. The Cytoplasmic segment spans residues Leu-2004 to Arg-2994. Zn(2+) contacts are provided by Cys-2012, Cys-2030, Cys-2032, and Cys-2053. The segment at Glu-2121–Ala-2209 is FKBP8-binding. The transcriptional activation stretch occupies residues Glu-2121–Val-2334. Positions Pro-2136 to Pro-2140 are interaction with non-structural protein 4A. Residues Arg-2190–Glu-2442 form an interaction with host SKP2 region. Ser-2195, Ser-2198, Ser-2202, Ser-2205, Ser-2208, and Ser-2211 each carry phosphoserine; by host. The segment at Ser-2211–Lys-2250 is ISDR. Residues Ser-2211–His-2276 are interaction with EIF2AK2/PKR. The segment at Lys-2250–Tyr-2308 is NS4B-binding. The interval Glu-2301–His-2378 is V3. Disordered regions lie at residues Pro-2319–Asp-2338 and Lys-2352–Thr-2413. The short motif at Pro-2324 to Pro-2327 is the SH3-binding element. The Nuclear localization signal signature appears at Pro-2329 to Leu-2337. Residue Lys-2352 forms a Glycyl lysine isopeptide (Lys-Gly) (interchain with G-Cter in ubiquitin) linkage. The span at Glu-2355–Gly-2365 shows a compositional bias: polar residues. Over residues Gln-2368–Gly-2383 the composition is skewed to basic and acidic residues. Phosphoserine; by host is present on residues Ser-2453 and Ser-2466. The RdRp catalytic domain maps to Pro-2638 to Asp-2756. Residues Asp-2644, Asp-2742, and Asp-2743 each contribute to the Mg(2+) site. A helical transmembrane segment spans residues Phe-2995–Arg-3015.

The protein belongs to the hepacivirus polyprotein family. Homooligomer. Interacts with E1 (via C-terminus). Interacts with the non-structural protein 5A. Interacts (via N-terminus) with host STAT1 (via SH2 domain); this interaction results in decreased STAT1 phosphorylation and ubiquitin-mediated proteasome-dependent STAT1 degradation, leading to decreased IFN-stimulated gene transcription. Interacts with host STAT3; this interaction constitutively activates STAT3. Interacts with host LTBR receptor. Interacts with host TNFRSF1A receptor and possibly induces apoptosis. Interacts with host HNRPK. Interacts with host YWHAE. Interacts with host UBE3A/E6AP. Interacts with host DDX3X. Interacts with host APOA2. Interacts with host RXRA protein. Interacts with host SP110 isoform 3/Sp110b; this interaction sequesters the transcriptional corepressor SP110 away from the nucleus. Interacts with host CREB3 nuclear transcription protein; this interaction triggers cell transformation. Interacts with host ACY3. Interacts with host C1QR1. Interacts with host RBM24; this interaction, which enhances the interaction of the mature core protein with 5'-UTR, may inhibit viral translation and favor replication. Interacts with host EIF2AK2/PKR; this interaction induces the autophosphorylation of EIF2AK2. Part of the viral assembly initiation complex composed of NS2, E1, E2, NS3, NS4A, NS5A and the mature core protein. In terms of assembly, forms a heterodimer with envelope glycoprotein E2. Interacts with mature core protein. Interacts with protease NS2. The heterodimer E1/E2 interacts with host CLDN1; this interaction plays a role in viral entry into host cell. Interacts with host SPSB2 (via C-terminus). Part of the viral assembly initiation complex composed of NS2, E1, E2, NS3, NS4A, NS5A and the mature core protein. Interacts with host NEURL3; this interaction prevents E1 binding to glycoprotein E2. As to quaternary structure, forms a heterodimer with envelope glycoprotein E1. Interacts with host CD81 and SCARB1 receptors; these interactions play a role in viral entry into host cell. Interacts with host EIF2AK2/PKR; this interaction inhibits EIF2AK2 and probably allows the virus to evade the innate immune response. Interacts with host CD209/DC-SIGN and CLEC4M/DC-SIGNR. Interact with host SPCS1; this interaction is essential for viral particle assembly. Interacts with protease NS2. The heterodimer E1/E2 interacts with host CLDN1; this interaction plays a role in viral entry into host cell. Part of the viral assembly initiation complex composed of NS2, E1, E2, NS3, NS4A, NS5A and the mature core protein. Interacts with host SLC3A2/4F2hc; the interaction may facilitate viral entry into host cell. Interacts with human PLSCR1. Homohexamer. Homoheptamer. Interacts with protease NS2. In terms of assembly, homodimer. Interacts with host SPCS1; this interaction is essential for viral particle assembly. Interacts with envelope glycoprotein E1. Interacts with envelope glycoprotein E2. Interacts with viroporin p7. Interacts with serine protease/helicase NS3. Part of the replication complex composed of NS2, NS3, NS4A, NS4B, NS5A and the RNA-directed RNA polymerase embedded in an ER-derived membranous web. Part of the viral assembly initiation complex composed of NS2, E1, E2, NS3, NS4A, NS5A and the mature core protein. As to quaternary structure, interacts with protease NS2. Interacts with non-structural protein 4A; this interaction stabilizes the folding of NS3 serine protease. NS3-NS4A interaction is essential for NS3 activation and allows membrane anchorage of the latter. NS3/NS4A complex also prevents phosphorylation of host IRF3, thus preventing the establishment of dsRNA induced antiviral state. Interacts with host MAVS; this interaction leads to the cleavage and inhibition of host MAVS. Interacts with host TICAM1; this interaction leads to the cleavage and inhibition of host TICAM1. Interacts with host TANK-binding kinase/TBK1; this interaction results in the inhibition of the association between TBK1 and IRF3, which leads to the inhibition of IRF3 activation. Interacts with host RBM24. Part of the replication complex composed of NS2, NS3, NS4A, NS4B, NS5A and the RNA-directed RNA polymerase embedded in an ER-derived membranous web. Part of the viral assembly initiation complex composed of NS2, E1, E2, NS3, NS4A, NS5A and the mature core protein. Interacts with NS3 serine protease; this interaction stabilizes the folding of NS3 serine protease. NS3-NS4A interaction is essential for NS3 activation and allows membrane anchorage of the latter. Interacts with non-structural protein 5A (via N-terminus). Part of the replication complex composed of NS2, NS3, NS4A, NS4B, NS5A and the RNA-directed RNA polymerase embedded in an ER-derived membranous web. Part of the viral assembly initiation complex composed of NS2, E1, E2, NS3, NS4A, NS5A and the mature core protein. In terms of assembly, homomultimer. Interacts with non-structural protein NS5A. Interacts with host PLA2G4C; this interaction likely initiates the recruitment of replication complexes to lipid droplets. Interacts with host STING; this interaction disrupts the interaction between STING and TBK1 thereby suppressing the interferon signaling. Part of the replication complex composed of NS2, NS3, NS4A, NS4B, NS5A and the RNA-directed RNA polymerase embedded in an ER-derived membranous web. As to quaternary structure, monomer. Homodimer; dimerization is required for RNA-binding. Interacts with the mature core protein. Interacts (via N-terminus) with non-structural protein 4A. Interacts with non-structural protein 4B. Interacts (via region D2) with RNA-directed RNA polymerase. Part of the viral assembly initiation complex composed of NS2, E1, E2, NS3, NS4A, NS5A and the mature core protein. Part of the replication complex composed of NS2, NS3, NS4A, NS4B, NS5A and the RNA-directed RNA polymerase embedded in an ER-derived membranous web. Interacts with host GRB2. Interacts with host BIN1. Interacts with host PIK3R1. Interacts with host SRCAP. Interacts with host FKBP8. Interacts (via C-terminus) with host VAPB (via MSP domain). Interacts with host EIF2AK2/PKR; this interaction leads to disruption of EIF2AK2 dimerization by NS5A and probably allows the virus to evade the innate immune response. Interacts (via N-terminus) with host PACSIN2 (via N-terminus); this interaction attenuates protein kinase C alpha-mediated phosphorylation of PACSIN2 by disrupting the interaction between PACSIN2 and PRKCA. Interacts (via N-terminus) with host SRC kinase (via SH2 domain). Interacts with most Src-family kinases. Interacts with host IFI27 and SKP2; promotes the ubiquitin-mediated proteasomal degradation of NS5A. Interacts with host GPS2. Interacts with host TNFRSF21; this interaction allows the modulation by the virus of JNK, p38 MAPK, STAT3, and Akt signaling pathways in a DR6-dependent manner. Interacts (via N-terminus) with host CIDEB (via N-terminus); this interaction seems to regulate the association of HCV particles with APOE. Interacts with host CHKA/Choline Kinase-alpha; CHKA bridges host PI4KA and NS5A and potentiates NS5A-stimulated PI4KA activity, which then facilitates the targeting of the ternary complex to the ER for viral replication. Interacts with host SPSB2 (via C-terminus); this interaction targets NS5A for ubiquitination and degradation. Interacts with host RAB18; this interaction may promote the association of NS5A and other replicase components with lipid droplets. Interacts (via region D2) with host PPIA/CYPA; the interaction stimulates RNA-binding ability of NS5A and is dependent on the peptidyl-prolyl cis-trans isomerase activity of PPIA/CYPA. Interacts with host TRIM14; this interaction induces the degradation of NS5A. Homooligomer. Interacts with non-structural protein 5A. Interacts with host VAPB. Interacts with host PRK2/PKN2. Interacts with host HNRNPA1 and SEPT6; these interactions facilitate viral replication. Part of the replication complex composed of NS2, NS3, NS4A, NS4B, NS5A and the RNA-directed RNA polymerase. Requires Zn(2+) as cofactor. Mg(2+) serves as cofactor. Post-translationally, specific enzymatic cleavages in vivo yield mature proteins. The structural proteins, core, E1, E2 and p7 are produced by proteolytic processing by host signal peptidases. The core protein precursor is synthesized as a 23 kDa, which is retained in the ER membrane through the hydrophobic signal peptide. Cleavage by the signal peptidase releases the 21 kDa mature core protein. The cleavage of the core protein precursor occurs between aminoacids 176 and 188 but the exact cleavage site is not known. Some degraded forms of the core protein appear as well during the course of infection. The other proteins (p7, NS2, NS3, NS4A, NS4B, NS5A and NS5B) are cleaved by the viral proteases. Autoprocessing between NS2 and NS3 is mediated by the NS2 cysteine protease catalytic domain and regulated by the NS3 N-terminal domain. Phosphorylated by host PKC and PKA. In terms of processing, ubiquitinated; mediated by UBE3A and leading to core protein subsequent proteasomal degradation. Post-translationally, highly N-glycosylated. Palmitoylation is required for NS2/3 autoprocessing and E2 recruitment to membranes. In terms of processing, palmitoylated. This modification may play a role in its polymerization or in protein-protein interactions. Post-translationally, phosphorylated on serines in a basal form termed p56. p58 is a hyperphosphorylated form of p56. p56 and p58 coexist in the cell in roughly equivalent amounts. Hyperphosphorylation is dependent on the presence of NS4A. Host CSNK1A1/CKI-alpha or RPS6KB1 kinases may be responsible for NS5A phosphorylation. Tyrosine phosphorylation is essential for the interaction with host SRC. In terms of processing, ubiquitinated. Ubiquitination, most probably at Lys-2352, mediated by host IFI27 and SKP2 leads to proteasomal degradation, restricting viral infection. Ubiquitination by host TRIM22 leads to interruption of viral replication. Post-translationally, the N-terminus is phosphorylated by host PRK2/PKN2.

The protein resides in the host endoplasmic reticulum membrane. The protein localises to the host mitochondrion membrane. It is found in the virion. It localises to the host cytoplasm. Its subcellular location is the host nucleus. The protein resides in the host lipid droplet. The protein localises to the virion membrane. It is found in the host mitochondrion. It localises to the host cell membrane. Its subcellular location is the host perinuclear region. The enzyme catalyses Hydrolysis of four peptide bonds in the viral precursor polyprotein, commonly with Asp or Glu in the P6 position, Cys or Thr in P1 and Ser or Ala in P1'.. It catalyses the reaction a ribonucleoside 5'-triphosphate + H2O = a ribonucleoside 5'-diphosphate + phosphate + H(+). The catalysed reaction is ATP + H2O = ADP + phosphate + H(+). It carries out the reaction RNA(n) + a ribonucleoside 5'-triphosphate = RNA(n+1) + diphosphate. Its activity is regulated as follows. Inhibited by the antiviral drug hexamethylene amiloride. Inhibition by amantadine appears to be genotype-dependent. Also inhibited by long-alkyl-chain iminosugar derivatives. Activity is up-regulated by PRK2/PKN2-mediated phosphorylation. In terms of biological role, packages viral RNA to form a viral nucleocapsid, and promotes virion budding. Participates in the viral particle production as a result of its interaction with the non-structural protein 5A. Binds RNA and may function as a RNA chaperone to induce the RNA structural rearrangements taking place during virus replication. Modulates viral translation initiation by interacting with viral IRES and 40S ribosomal subunit. Affects various cell signaling pathways, host immunity and lipid metabolism. Prevents the establishment of cellular antiviral state by blocking the interferon-alpha/beta (IFN-alpha/beta) and IFN-gamma signaling pathways and by blocking the formation of phosphorylated STAT1 and promoting ubiquitin-mediated proteasome-dependent degradation of STAT1. Activates STAT3 leading to cellular transformation. Regulates the activity of cellular genes, including c-myc and c-fos. May repress the promoter of p53, and sequester CREB3 and SP110 isoform 3/Sp110b in the cytoplasm. Represses cell cycle negative regulating factor CDKN1A, thereby interrupting an important check point of normal cell cycle regulation. Targets transcription factors involved in the regulation of inflammatory responses and in the immune response: suppresses TNF-induced NF-kappa-B activation, and activates AP-1. Binds to dendritic cells (DCs) via C1QR1, resulting in down-regulation of T-lymphocytes proliferation. Alters lipid metabolism by interacting with hepatocellular proteins involved in lipid accumulation and storage. Induces up-regulation of FAS promoter activity, and thereby contributes to the increased triglyceride accumulation in hepatocytes (steatosis). Its function is as follows. Forms a heterodimer with envelope glycoprotein E2, which mediates virus attachment to the host cell, virion internalization through clathrin-dependent endocytosis and fusion with host membrane. Fusion with the host cell is most likely mediated by both E1 and E2, through conformational rearrangements of the heterodimer required for fusion rather than a classical class II fusion mechanism. E1/E2 heterodimer binds host apolipoproteins such as APOB and ApoE thereby forming a lipo-viro-particle (LVP). APOE associated to the LVP allows the initial virus attachment to cell surface receptors such as the heparan sulfate proteoglycans (HSPGs), syndecan-1 (SDC1), syndecan-1 (SDC2), the low-density lipoprotein receptor (LDLR) and scavenger receptor class B type I (SCARB1). The cholesterol transfer activity of SCARB1 allows E2 exposure and binding of E2 to SCARB1 and the tetraspanin CD81. E1/E2 heterodimer binding on CD81 activates the epithelial growth factor receptor (EGFR) signaling pathway. Diffusion of the complex E1-E2-EGFR-SCARB1-CD81 to the cell lateral membrane allows further interaction with Claudin 1 (CLDN1) and occludin (OCLN) to finally trigger HCV entry. Forms a heterodimer with envelope glycoprotein E1, which mediates virus attachment to the host cell, virion internalization through clathrin-dependent endocytosis and fusion with host membrane. Fusion with the host cell is most likely mediated by both E1 and E2, through conformational rearrangements of the heterodimer required for fusion rather than a classical class II fusion mechanism. The interaction between envelope glycoprotein E2 and host apolipoprotein E/APOE allows the proper assembly, maturation and infectivity of the viral particles. This interaction is probably promoted via the up-regulation of cellular autophagy by the virus. E1/E2 heterodimer binds host apolipoproteins such as APOB and APOE thereby forming a lipo-viro-particle (LVP). APOE associated to the LVP allows the initial virus attachment to cell surface receptors such as the heparan sulfate proteoglycans (HSPGs), syndecan-1 (SDC1), syndecan-1 (SDC2), the low-density lipoprotein receptor (LDLR) and scavenger receptor class B type I (SCARB1). The cholesterol transfer activity of SCARB1 allows E2 exposure and binding of E2 to SCARB1 and the tetraspanin CD81. E1/E2 heterodimer binding on CD81 activates the epithelial growth factor receptor (EGFR) signaling pathway. Diffusion of the complex E1-E2-EGFR-SCARB1-CD81 to the cell lateral membrane allows further interaction with Claudin 1 (CLDN1) and occludin (OCLN) to finally trigger HCV entry. Inhibits host EIF2AK2/PKR activation, preventing the establishment of an antiviral state. Viral ligand for CD209/DC-SIGN and CLEC4M/DC-SIGNR, which are respectively found on dendritic cells (DCs), and on liver sinusoidal endothelial cells and macrophage-like cells of lymph node sinuses. These interactions allow the capture of circulating HCV particles by these cells and subsequent facilitated transmission to permissive cells such as hepatocytes and lymphocyte subpopulations. The interaction between E2 and host amino acid transporter complex formed by SLC3A2 and SLC7A5/LAT1 may facilitate viral entry into host cell. Functionally, ion channel protein that acts as a viroporin and plays an essential role in the assembly, envelopment and secretion of viral particles. Regulates the host cell secretory pathway, which induces the intracellular retention of viral glycoproteins and favors assembly of viral particles. Creates a pore in acidic organelles and releases Ca(2+) and H(+) in the cytoplasm of infected cells, leading to a productive viral infection. High levels of cytoplasmic Ca(2+) may trigger membrane trafficking and transport of viral ER-associated proteins to viroplasms, sites of viral genome replication. This ionic imbalance induces the assembly of the inflammasome complex, which triggers the maturation of pro-IL-1beta into IL-1beta through the action of caspase-1. Targets also host mitochondria and induces mitochondrial depolarization. In addition of its role as a viroporin, acts as a lipid raft adhesion factor. In terms of biological role, cysteine protease required for the proteolytic auto-cleavage between the non-structural proteins NS2 and NS3. The N-terminus of NS3 is required for the function of NS2 protease (active region NS2-3). Promotes the initiation of viral particle assembly by mediating the interaction between structural and non-structural proteins. Its function is as follows. Displays three enzymatic activities: serine protease with a chymotrypsin-like fold, NTPase and RNA helicase. NS3 serine protease, in association with NS4A, is responsible for the cleavages of NS3-NS4A, NS4A-NS4B, NS4B-NS5A and NS5A-NS5B. The NS3/NS4A complex prevents phosphorylation of host IRF3, thus preventing the establishment of dsRNA induced antiviral state. The NS3/NS4A complex induces host amino acid transporter component SLC3A2, thus contributing to HCV propagation. NS3 RNA helicase binds to RNA and unwinds both dsDNA and dsRNA in the 3' to 5' direction, and likely resolves RNA complicated stable secondary structures in the template strand. Binds a single ATP and catalyzes the unzipping of a single base pair of dsRNA. Inhibits host antiviral proteins TBK1 and IRF3 thereby preventing the establishment of an antiviral state. Cleaves host MAVS/CARDIF thereby preventing the establishment of an antiviral state. Cleaves host TICAM1/TRIF, thereby disrupting TLR3 signaling and preventing the establishment of an antiviral state. Peptide cofactor which forms a non-covalent complex with the N-terminal of NS3 serine protease. The NS3/NS4A complex prevents phosphorylation of host IRF3, thus preventing the establishment of dsRNA induced antiviral state. The NS3/NS4A complex induces host amino acid transporter component SLC3A2, thus contributing to HCV propagation. Functionally, induces a specific membrane alteration that serves as a scaffold for the virus replication complex. This membrane alteration gives rise to the so-called ER-derived membranous web that contains the replication complex. NS4B self-interaction contributes to its function in membranous web formation. Promotes host TRIF protein degradation in a CASP8-dependent manner thereby inhibiting host TLR3-mediated interferon signaling. Disrupts the interaction between STING and TBK1 contributing to the inhibition of interferon signaling. In terms of biological role, phosphorylated protein that is indispensable for viral replication and assembly. Both hypo- and hyperphosphorylated states are required for the viral life cycle. The hyperphosphorylated form of NS5A is an inhibitor of viral replication. Involved in RNA-binding and especially in binding to the viral genome. Zinc is essential for RNA-binding. Participates in the viral particle production as a result of its interaction with the mature viral core protein. Its interaction with host VAPB may target the viral replication complex to vesicles. Down-regulates viral IRES translation initiation. Mediates interferon resistance, presumably by interacting with and inhibiting host EIF2AK2/PKR. Prevents BIN1-induced apoptosis. Acts as a transcriptional activator of some host genes important for viral replication when localized in the nucleus. Via the interaction with host PACSIN2, modulates lipid droplet formation in order to promote virion assembly. Modulates TNFRSF21/DR6 signaling pathway for viral propagation. Its function is as follows. RNA-dependent RNA polymerase that performs primer-template recognition and RNA synthesis during viral replication. Initiates RNA transcription/replication at a flavin adenine dinucleotide (FAD), resulting in a 5'- FAD cap on viral RNAs. In this way, recognition of viral 5' RNA by host pattern recognition receptors can be bypassed, thereby evading activation of antiviral pathways. The polypeptide is Genome polyprotein (Hepatitis C virus genotype 6h (isolate VN004) (HCV)).